A 184-amino-acid chain; its full sequence is Interferon alpha-3 (184 aa).

Residues 1-23 form the signal peptide; it reads MALPVSLLMALVVLSCHSSCSLG. Cystine bridges form between cysteine 24-cysteine 122 and cysteine 52-cysteine 162.

The protein belongs to the alpha/beta interferon family.

The protein localises to the secreted. Produced by macrophages, IFN-alpha have antiviral activities. Interferon stimulates the production of two enzymes: a protein kinase and an oligoadenylate synthetase. This chain is Interferon alpha-3, found in Equus caballus (Horse).